Reading from the N-terminus, the 109-residue chain is B melanoma antigen 3 (109 aa).

The signal sequence occupies residues 1–17 (MAAGVVFLALSAQLLQA).

This sequence belongs to the BAGE family. Not expressed in normal tissues except in testis. Expressed in melanoma, bladder and lung carcinomas.

The protein localises to the secreted. In terms of biological role, unknown. Candidate gene encoding tumor antigens. This chain is B melanoma antigen 3 (BAGE3), found in Homo sapiens (Human).